The following is a 148-amino-acid chain: Small ribosomal subunit protein eS19 (148 aa).

Over residues 79–90 (HGSTKNRGSRPA) the composition is skewed to basic residues. 2 disordered regions span residues 79-98 (HGST…ASGA) and 116-148 (DEEK…EDDE). Residues 130-140 (RDLDRIAKTTV) are compositionally biased toward basic and acidic residues.

The protein belongs to the eukaryotic ribosomal protein eS19 family.

In Emericella nidulans (strain FGSC A4 / ATCC 38163 / CBS 112.46 / NRRL 194 / M139) (Aspergillus nidulans), this protein is Small ribosomal subunit protein eS19 (rps19).